A 730-amino-acid polypeptide reads, in one-letter code: Probable G-protein coupled receptor 149 (730 aa).

At 1-34 (MSFFLSNLTNDSRLWKVSHNSTDLMNSPETLTLS) the chain is on the extracellular side. N-linked (GlcNAc...) asparagine glycosylation is found at N7, N10, and N20. A helical transmembrane segment spans residues 35 to 55 (LFCLICLMTLVALVGSIFSLV). At 56 to 68 (SLLTMQYRTVVSM) the chain is on the cytoplasmic side. The helical transmembrane segment at 69-89 (LVTSWSVDDLLSVLSVAIFMV) threads the bilayer. Over 90 to 108 (LQWPREAPGYFQSLCTTSA) the chain is Extracellular. C104 and C181 are oxidised to a cystine. A helical membrane pass occupies residues 109-131 (LLYMCQGLSSNLKATLIVFYNFY). The Cytoplasmic portion of the chain corresponds to 132 to 148 (TMHRTVVSQSSSWRSGQ). A helical transmembrane segment spans residues 149-169 (VLGVALTVWAVSLLLASLPLC). Residues 170-188 (GWGVFVRTPWGCLTDCSSP) are Extracellular-facing. The chain crosses the membrane as a helical span at residues 189 to 209 (YVLLLFAVYASAFGLLAVLSV). Topologically, residues 210–308 (PLTHQLLCSE…SFPVSLAQKR (99 aa)) are cytoplasmic. Residues 309-329 (FALILALTKVILWLPMMIHMV) traverse the membrane as a helical segment. Topologically, residues 330-340 (VKHVVGFQSLP) are extracellular. A helical membrane pass occupies residues 341–361 (VDMLSFLLTLLASTVTPVFVL). The Cytoplasmic portion of the chain corresponds to 362–730 (SKRWAHLPCG…RKREAESKGN (369 aa)).

It belongs to the G-protein coupled receptor 1 family. Expressed exclusively in brain and testis.

It localises to the cell membrane. Its function is as follows. Orphan receptor. This chain is Probable G-protein coupled receptor 149 (Gpr149), found in Rattus norvegicus (Rat).